We begin with the raw amino-acid sequence, 89 residues long: Acylphosphatase (89 aa).

In terms of domain architecture, Acylphosphatase-like spans 3–88; that stretch reads TLHLQIEGRV…GEYSGFEKRS (86 aa). Residues arginine 18 and asparagine 36 contribute to the active site.

Belongs to the acylphosphatase family.

The catalysed reaction is an acyl phosphate + H2O = a carboxylate + phosphate + H(+). This is Acylphosphatase (acyP) from Thiobacillus denitrificans (strain ATCC 25259 / T1).